We begin with the raw amino-acid sequence, 371 residues long: Putative RING finger protein ORF117 (371 aa).

The RING-type zinc finger occupies 72–108; that stretch reads CCICFRKDVIYKEVPCGHYICVECYKEPIRNVCPECN. Residues 178 to 192 show a composition bias toward acidic residues; that stretch reads EEEMNESEAEEEEPV. Residues 178–218 are disordered; that stretch reads EEEMNESEAEEEEPVPEIAQFEALNTPPPPPTNRRPKIRRP.

The sequence is that of Putative RING finger protein ORF117 from Magallana gigas (Pacific oyster).